The primary structure comprises 628 residues: Netrin-4 (628 aa).

An N-terminal signal peptide occupies residues 1–19; the sequence is MGSCARLLLLWGCSAVAAG. Positions 30-261 constitute a Laminin N-terminal domain; the sequence is CEKACNPRMG…AVYDFIVKGS (232 aa). Residues asparagine 56 and asparagine 163 are each glycosylated (N-linked (GlcNAc...) asparagine). Disulfide bonds link cysteine 262-cysteine 271, cysteine 264-cysteine 293, cysteine 295-cysteine 304, cysteine 307-cysteine 329, cysteine 332-cysteine 341, cysteine 334-cysteine 359, cysteine 362-cysteine 371, cysteine 374-cysteine 392, cysteine 395-cysteine 413, cysteine 397-cysteine 420, cysteine 422-cysteine 431, and cysteine 434-cysteine 446. Laminin EGF-like domains lie at 262 to 331, 332 to 394, and 395 to 448; these read CFCN…ECRT, CKCN…ACKA, and CSCH…GCRP. Asparagine 353 carries an N-linked (GlcNAc...) asparagine glycan. Asparagine 483 carries N-linked (GlcNAc...) asparagine glycosylation. 2 cysteine pairs are disulfide-bonded: cysteine 506-cysteine 576 and cysteine 520-cysteine 627. Residues 506-627 enclose the NTR domain; sequence CECKEQVLGN…RVMHILKRDC (122 aa).

May form a homodimer. In terms of tissue distribution, expressed in kidney, liver, heart, ovary, testis, retina, brain, olfactory bulb, and widely expressed in embryo.

Its subcellular location is the secreted. It localises to the extracellular space. It is found in the extracellular matrix. The protein resides in the basement membrane. Functionally, may play an important role in neural, kidney and vascular development. Promotes neurite elongation from olfactory bulb explants. This chain is Netrin-4 (Ntn4), found in Mus musculus (Mouse).